Consider the following 154-residue polypeptide: MSGKVRLEDRVSAWAMPIVEELGLELIDVEWVKEGGNWYLRIFIDKEAGIEMEDCQEVSRRIDEILDREDPVAHSYSLEVSSPGIDRPLKSDRDYERFRGETVRITTFAPVMGAKEHLGELAGKNETSILIRKNDEEMAIPLTQVSSVRLYPGF.

Belongs to the RimP family.

It is found in the cytoplasm. Required for maturation of 30S ribosomal subunits. The protein is Ribosome maturation factor RimP of Heliobacterium modesticaldum (strain ATCC 51547 / Ice1).